A 308-amino-acid polypeptide reads, in one-letter code: Sulfate adenylyltransferase subunit 2 (308 aa).

Residues Arg286–Phe308 are disordered.

The protein belongs to the PAPS reductase family. CysD subfamily. Heterodimer composed of CysD, the smaller subunit, and CysN.

The enzyme catalyses sulfate + ATP + H(+) = adenosine 5'-phosphosulfate + diphosphate. It participates in sulfur metabolism; hydrogen sulfide biosynthesis; sulfite from sulfate: step 1/3. Its function is as follows. With CysN forms the ATP sulfurylase (ATPS) that catalyzes the adenylation of sulfate producing adenosine 5'-phosphosulfate (APS) and diphosphate, the first enzymatic step in sulfur assimilation pathway. APS synthesis involves the formation of a high-energy phosphoric-sulfuric acid anhydride bond driven by GTP hydrolysis by CysN coupled to ATP hydrolysis by CysD. The protein is Sulfate adenylyltransferase subunit 2 of Nocardia farcinica (strain IFM 10152).